The following is an 887-amino-acid chain: Alanine--tRNA ligase (887 aa).

Residues His-564, His-568, Cys-676, and His-680 each coordinate Zn(2+).

This sequence belongs to the class-II aminoacyl-tRNA synthetase family. It depends on Zn(2+) as a cofactor.

It localises to the cytoplasm. The catalysed reaction is tRNA(Ala) + L-alanine + ATP = L-alanyl-tRNA(Ala) + AMP + diphosphate. Functionally, catalyzes the attachment of alanine to tRNA(Ala) in a two-step reaction: alanine is first activated by ATP to form Ala-AMP and then transferred to the acceptor end of tRNA(Ala). Also edits incorrectly charged Ser-tRNA(Ala) and Gly-tRNA(Ala) via its editing domain. This chain is Alanine--tRNA ligase, found in Rhizobium meliloti (strain 1021) (Ensifer meliloti).